The primary structure comprises 467 residues: tRNA modification GTPase MnmE (467 aa).

The (6S)-5-formyl-5,6,7,8-tetrahydrofolate site is built by arginine 25, glutamate 87, and lysine 130. Positions 226–389 (GLSVVLAGQP…LRGELLRIAG (164 aa)) constitute a TrmE-type G domain. Asparagine 236 lines the K(+) pocket. GTP contacts are provided by residues 236 to 241 (NVGKSS), 255 to 261 (TPIAGTT), and 280 to 283 (DTAG). Serine 240 is a Mg(2+) binding site. K(+) contacts are provided by threonine 255, isoleucine 257, and threonine 260. Threonine 261 lines the Mg(2+) pocket. Lysine 467 contributes to the (6S)-5-formyl-5,6,7,8-tetrahydrofolate binding site.

It belongs to the TRAFAC class TrmE-Era-EngA-EngB-Septin-like GTPase superfamily. TrmE GTPase family. Homodimer. Heterotetramer of two MnmE and two MnmG subunits. K(+) serves as cofactor.

The protein resides in the cytoplasm. Functionally, exhibits a very high intrinsic GTPase hydrolysis rate. Involved in the addition of a carboxymethylaminomethyl (cmnm) group at the wobble position (U34) of certain tRNAs, forming tRNA-cmnm(5)s(2)U34. The chain is tRNA modification GTPase MnmE from Burkholderia mallei (strain NCTC 10247).